The sequence spans 64 residues: Large ribosomal subunit protein bL35 (64 aa).

A disordered region spans residues 1 to 54 (MPKIKSNSGAAKRFKKTAHGFKHKQSFRSHILTKKSTKRKRQLRGMKQIHDADK). Residues 12–44 (KRFKKTAHGFKHKQSFRSHILTKKSTKRKRQLR) show a composition bias toward basic residues.

The protein belongs to the bacterial ribosomal protein bL35 family.

The chain is Large ribosomal subunit protein bL35 from Chromohalobacter salexigens (strain ATCC BAA-138 / DSM 3043 / CIP 106854 / NCIMB 13768 / 1H11).